A 701-amino-acid chain; its full sequence is Polyribonucleotide nucleotidyltransferase (701 aa).

Mg(2+) is bound by residues Asp-487 and Asp-493. A KH domain is found at 554 to 613 (PTMIAMKIDTDKIRDVIGKGGATIRAICEETKASIDIEDDGSIKIFGETKEAAEAARQRV). The 69-residue stretch at 623-691 (GKIYVGKVER…NRGRIKLSIK (69 aa)) folds into the S1 motif domain.

The protein belongs to the polyribonucleotide nucleotidyltransferase family. In terms of assembly, component of the RNA degradosome, which is a multiprotein complex involved in RNA processing and mRNA degradation. Mg(2+) serves as cofactor.

The protein localises to the cytoplasm. The catalysed reaction is RNA(n+1) + phosphate = RNA(n) + a ribonucleoside 5'-diphosphate. Functionally, involved in mRNA degradation. Catalyzes the phosphorolysis of single-stranded polyribonucleotides processively in the 3'- to 5'-direction. The protein is Polyribonucleotide nucleotidyltransferase of Pseudomonas putida (strain W619).